Reading from the N-terminus, the 427-residue chain is Adenylosuccinate synthetase (427 aa).

Residues 12 to 18 (GDEGKGK) and 40 to 42 (GHT) each bind GTP. Residue aspartate 13 is the Proton acceptor of the active site. 2 residues coordinate Mg(2+): aspartate 13 and glycine 40. IMP is bound by residues 13–16 (DEGK), 38–41 (NAGH), threonine 128, arginine 142, glutamine 223, threonine 238, and arginine 302. Histidine 41 acts as the Proton donor in catalysis. Residue 298 to 304 (TTTGRPR) participates in substrate binding. Residues arginine 304, 330 to 332 (KLD), and 412 to 414 (AVG) each bind GTP.

Belongs to the adenylosuccinate synthetase family. As to quaternary structure, homodimer. Requires Mg(2+) as cofactor.

It is found in the cytoplasm. The enzyme catalyses IMP + L-aspartate + GTP = N(6)-(1,2-dicarboxyethyl)-AMP + GDP + phosphate + 2 H(+). It functions in the pathway purine metabolism; AMP biosynthesis via de novo pathway; AMP from IMP: step 1/2. Functionally, plays an important role in the de novo pathway of purine nucleotide biosynthesis. Catalyzes the first committed step in the biosynthesis of AMP from IMP. This Moorella thermoacetica (strain ATCC 39073 / JCM 9320) protein is Adenylosuccinate synthetase.